Consider the following 27-residue polypeptide: Cupiennin-3c (27 aa).

As to expression, expressed by the venom gland.

It localises to the secreted. The chain is Cupiennin-3c from Cupiennius salei (American wandering spider).